The chain runs to 341 residues: UDP-3-O-(3-hydroxymyristoyl)glucosamine N-acyltransferase (341 aa).

The Proton acceptor role is filled by histidine 239.

It belongs to the transferase hexapeptide repeat family. LpxD subfamily. Homotrimer.

The enzyme catalyses a UDP-3-O-[(3R)-3-hydroxyacyl]-alpha-D-glucosamine + a (3R)-hydroxyacyl-[ACP] = a UDP-2-N,3-O-bis[(3R)-3-hydroxyacyl]-alpha-D-glucosamine + holo-[ACP] + H(+). The catalysed reaction is UDP-3-O-[(3R)-3-hydroxytetradecanoyl]-alpha-D-glucosamine + (3R)-hydroxytetradecanoyl-[ACP] = UDP-2-N,3-O-bis[(3R)-3-hydroxytetradecanoyl]-alpha-D-glucosamine + holo-[ACP] + H(+). The protein operates within glycolipid biosynthesis; lipid IV(A) biosynthesis; lipid IV(A) from (3R)-3-hydroxytetradecanoyl-[acyl-carrier-protein] and UDP-N-acetyl-alpha-D-glucosamine: step 3/6. In terms of biological role, catalyzes the N-acylation of UDP-3-O-(hydroxytetradecanoyl)glucosamine using 3-hydroxytetradecanoyl-ACP as the acyl donor. Is involved in the biosynthesis of lipid A, a phosphorylated glycolipid that anchors the lipopolysaccharide to the outer membrane of the cell. This chain is UDP-3-O-(3-hydroxymyristoyl)glucosamine N-acyltransferase, found in Salmonella paratyphi A (strain ATCC 9150 / SARB42).